Reading from the N-terminus, the 235-residue chain is Tetraspanin-8 (235 aa).

The Cytoplasmic portion of the chain corresponds to Met1–Met12. Residues Phe13 to Val33 traverse the membrane as a helical segment. Topologically, residues Arg34–Pro52 are extracellular. Residues Phe53–Gly73 form a helical membrane-spanning segment. Topologically, residues Cys74–Met84 are cytoplasmic. A helical membrane pass occupies residues Leu85–Leu105. At Gly106–Asn203 the chain is on the extracellular side. Asn118 carries an N-linked (GlcNAc...) asparagine glycan. The helical transmembrane segment at Ile204 to Phe224 threads the bilayer. Residues Ser225–Lys235 are Cytoplasmic-facing.

The protein belongs to the tetraspanin (TM4SF) family. Forms homooligomers. Interacts with MEP1B. Interacts with integrin alpha3/ITGA3. Interacts with RICTOR and MTOR. Interacts with ADAM17. Interacts with ECE1.

The protein resides in the cell membrane. Its function is as follows. Structural component of specialized membrane microdomains known as tetraspanin-enriched microdomains (TERMs), which act as platforms for receptor clustering and signaling. Participates thereby in diverse biological functions such as cell signal transduction, migration and protein trafficking. Promotes ADAM17-mediated TNF-alpha processing through recruitment of ADAM17 to tetraspanin-enriched micro-domains (TEMs). Forms a complex with RICTOR and integrin alpha3/ITGA3 to mediate mTORC2 activation and AKT1 phosphorylation leading to cell migration. Reduces apoptosis and autophagy induced by high glucose levels through forming a complex with mTOR and RICTOR. Contributes to the maintenance of intestinal epithelial barrier and plays a role in the regulation of intestine inflammation by switching interferon gamma receptor 1/IFNGR1 from clathrin-dependent to lipid raft-dependent endocytosis route to limit STAT1 activation magnitude and duration. Acts as a modulator of the endothelin axis by associating with endothelin converting enzyme ECE1 and regulating its activity of conversion of the endothelin-1 precursor to endothelin. The sequence is that of Tetraspanin-8 (Tspan8) from Mus musculus (Mouse).